The chain runs to 778 residues: MNKKILETLEFDKIKALFEPHLLTEQGLEQLRQLAPTAKADKIKQAFAEMKEMQALFVEQPHFTILSTKEIAGVCKRLEMGADLNIEEFLLLKRVLLTSRELQSFYANLENVSLEELALWFEKLHDFPQLQGNLQAFNDAGFIENFASEELARIRRKIHDSESQVRDVLQDLLKQKAQMLTEGIVASRNGRQVLPVKNTYRNKIAGVVHDISASGNTVYIEPREVVKLSEEIASLRADERYEMLRILQEISERVRPHAAEIANDAWIIGHLDLIRAKVRFIQERQAVVPQLSENQEIQLLHVCHPLVKNAVANDVYFGQDLTAIVITGPNTGGKTIMLKTLGLTQVMAQSGLPILADKGSRVGIFEEIFADIGDEQSIEQSLSTFSSHMTNIVDILGKVNQHSLLLLDELGAGTDPQEGAALAMAILEDLRLRQIKTMATTHYPELKAYGIETAFVQNASMEFDTATLRPTYRFMQGVPGRSNAFEIAKRLGLSEVIVGDASQQIDQDNDVNRIIEQLEEQTLESRKRLDNIREVEQENLKMNRVLKKLYNELNREKETELNKAREQAAEIVDMALSESDQILKNLHSKSQLKPHEIIEAKAKLKKLAPEKVDLSKNKVLQKAKKKRAPKVGDDIVVLSYGQRGTLTSQLKDGRWEAQVGLIKMTLEEKEFDLVQAQQEKPVKKKQVNVVKRTSGRGPQARLDLRGKRYEEAMNELDTFIDQALLNNMAQVDIIHGIGTGVIREGVTKYLQRNKHVKSFGYAPQNAGGSGATIVTFKG.

328–335 (GPNTGGKT) is an ATP binding site. Residues 702–777 (LDLRGKRYEE…GSGATIVTFK (76 aa)) form the Smr domain.

The protein belongs to the DNA mismatch repair MutS family. MutS2 subfamily. In terms of assembly, homodimer. Binds to stalled ribosomes, contacting rRNA.

Its function is as follows. Endonuclease that is involved in the suppression of homologous recombination and thus may have a key role in the control of bacterial genetic diversity. Acts as a ribosome collision sensor, splitting the ribosome into its 2 subunits. Detects stalled/collided 70S ribosomes which it binds and splits by an ATP-hydrolysis driven conformational change. Acts upstream of the ribosome quality control system (RQC), a ribosome-associated complex that mediates the extraction of incompletely synthesized nascent chains from stalled ribosomes and their subsequent degradation. Probably generates substrates for RQC. In Streptococcus pneumoniae (strain 70585), this protein is Endonuclease MutS2.